The chain runs to 403 residues: D-galactonate dehydratase family member Mmwyl1_0037 (403 aa).

2 residues coordinate substrate: Asn-37 and His-122. The active-site Proton donor/acceptor is the Tyr-159. Asp-211 provides a ligand contact to Mg(2+). Residue His-213 is the Proton donor/acceptor of the active site. Mg(2+) contacts are provided by Glu-237 and Glu-263. 5 residues coordinate substrate: Glu-263, Arg-284, His-313, Asp-317, and Glu-340.

The protein belongs to the mandelate racemase/muconate lactonizing enzyme family. GalD subfamily. It depends on Mg(2+) as a cofactor.

It catalyses the reaction D-mannonate = 2-dehydro-3-deoxy-D-gluconate + H2O. In terms of biological role, has low D-mannonate dehydratase activity (in vitro), suggesting that this is not a physiological substrate and that it has no significant role in D-mannonate degradation in vivo. Has no detectable activity with a panel of 70 other acid sugars (in vitro). This Marinomonas sp. (strain MWYL1) protein is D-galactonate dehydratase family member Mmwyl1_0037.